The following is a 397-amino-acid chain: Elongation factor Tu-1 (397 aa).

One can recognise a tr-type G domain in the interval 10–206 (KPHVNIGTIG…AVDEAIPEPE (197 aa)). Residues 19–26 (GHIDHGKT) form a G1 region. 19-26 (GHIDHGKT) serves as a coordination point for GTP. Mg(2+) is bound at residue Thr26. The interval 62–66 (GITIS) is G2. Residues 83–86 (DCPG) form a G3 region. Residues 83–87 (DCPGH) and 138–141 (NKAD) contribute to the GTP site. Residues 138–141 (NKAD) are G4. A G5 region spans residues 176 to 178 (SAL).

This sequence belongs to the TRAFAC class translation factor GTPase superfamily. Classic translation factor GTPase family. EF-Tu/EF-1A subfamily. As to quaternary structure, monomer.

The protein localises to the cytoplasm. It carries out the reaction GTP + H2O = GDP + phosphate + H(+). Functionally, GTP hydrolase that promotes the GTP-dependent binding of aminoacyl-tRNA to the A-site of ribosomes during protein biosynthesis. This chain is Elongation factor Tu-1, found in Streptomyces coelicolor (strain ATCC BAA-471 / A3(2) / M145).